We begin with the raw amino-acid sequence, 1289 residues long: DNA-directed RNA polymerase subunit beta (1289 aa).

It belongs to the RNA polymerase beta chain family. As to quaternary structure, the RNAP catalytic core consists of 2 alpha, 1 beta, 1 beta' and 1 omega subunit. When a sigma factor is associated with the core the holoenzyme is formed, which can initiate transcription.

The enzyme catalyses RNA(n) + a ribonucleoside 5'-triphosphate = RNA(n+1) + diphosphate. DNA-dependent RNA polymerase catalyzes the transcription of DNA into RNA using the four ribonucleoside triphosphates as substrates. The polypeptide is DNA-directed RNA polymerase subunit beta (Methylacidiphilum infernorum (isolate V4) (Methylokorus infernorum (strain V4))).